The chain runs to 342 residues: uncharacterized protein (342 aa).

Residues Cys-41, His-63, Cys-94, Cys-97, Cys-100, Cys-108, and Glu-149 each contribute to the Zn(2+) site.

Belongs to the zinc-containing alcohol dehydrogenase family. It depends on Zn(2+) as a cofactor.

This is an uncharacterized protein from Haemophilus influenzae (strain ATCC 51907 / DSM 11121 / KW20 / Rd).